Here is a 160-residue protein sequence, read N- to C-terminus: 2-C-methyl-D-erythritol 2,4-cyclodiphosphate synthase (160 aa).

The a divalent metal cation site is built by D9 and H11. 4-CDP-2-C-methyl-D-erythritol 2-phosphate contacts are provided by residues 9 to 11 (DVH) and 35 to 36 (HS). H43 lines the a divalent metal cation pocket. Residues 57 to 59 (DIG), 62 to 66 (FPDTD), 101 to 107 (AQKPKMA), 133 to 136 (TTTE), F140, and R143 each bind 4-CDP-2-C-methyl-D-erythritol 2-phosphate.

Belongs to the IspF family. As to quaternary structure, homotrimer. A divalent metal cation serves as cofactor.

It catalyses the reaction 4-CDP-2-C-methyl-D-erythritol 2-phosphate = 2-C-methyl-D-erythritol 2,4-cyclic diphosphate + CMP. It functions in the pathway isoprenoid biosynthesis; isopentenyl diphosphate biosynthesis via DXP pathway; isopentenyl diphosphate from 1-deoxy-D-xylulose 5-phosphate: step 4/6. Functionally, involved in the biosynthesis of isopentenyl diphosphate (IPP) and dimethylallyl diphosphate (DMAPP), two major building blocks of isoprenoid compounds. Catalyzes the conversion of 4-diphosphocytidyl-2-C-methyl-D-erythritol 2-phosphate (CDP-ME2P) to 2-C-methyl-D-erythritol 2,4-cyclodiphosphate (ME-CPP) with a corresponding release of cytidine 5-monophosphate (CMP). This Geobacillus thermodenitrificans (strain NG80-2) protein is 2-C-methyl-D-erythritol 2,4-cyclodiphosphate synthase.